The sequence spans 487 residues: Ribulose bisphosphate carboxylase large chain (487 aa).

2 residues coordinate substrate: Asn127 and Thr177. Lys179 serves as the catalytic Proton acceptor. Position 181 (Lys181) interacts with substrate. The Mg(2+) site is built by Lys205, Asp207, and Glu208. An N6-carboxylysine modification is found at Lys205. Catalysis depends on His297, which acts as the Proton acceptor. Substrate contacts are provided by Arg298, His330, and Ser382.

This sequence belongs to the RuBisCO large chain family. Type I subfamily. In terms of assembly, heterohexadecamer of 8 large chains and 8 small chains. Requires Mg(2+) as cofactor.

It catalyses the reaction 2 (2R)-3-phosphoglycerate + 2 H(+) = D-ribulose 1,5-bisphosphate + CO2 + H2O. It carries out the reaction D-ribulose 1,5-bisphosphate + O2 = 2-phosphoglycolate + (2R)-3-phosphoglycerate + 2 H(+). In terms of biological role, ruBisCO catalyzes two reactions: the carboxylation of D-ribulose 1,5-bisphosphate, the primary event in carbon dioxide fixation, as well as the oxidative fragmentation of the pentose substrate. Both reactions occur simultaneously and in competition at the same active site. The polypeptide is Ribulose bisphosphate carboxylase large chain (Paracoccus denitrificans (strain Pd 1222)).